Consider the following 335-residue polypeptide: UPF0353 protein NFA_34780 (335 aa).

Helical transmembrane passes span 8 to 28 and 61 to 81; these read ALIW…YVLV and IALM…PTSV. One can recognise a VWFA domain in the interval 90-295; the sequence is TVVLVMDVSL…EELTAVYDTL (206 aa). A helical membrane pass occupies residues 310-330; the sequence is RPWLLLGMLVVAAGIVTGLLY.

It belongs to the UPF0353 family.

It localises to the cell membrane. This Nocardia farcinica (strain IFM 10152) protein is UPF0353 protein NFA_34780.